The chain runs to 181 residues: Probable calcium-binding protein CML16 (181 aa).

A disordered region spans residues Met-1–Ala-24. 4 consecutive EF-hand domains span residues Pro-23 to Pro-58, Ala-63 to Asp-98, Glu-100 to Gly-135, and Cys-136 to Ala-171. Ca(2+)-binding residues include Asp-36, Asp-38, Asp-40, Arg-42, Glu-47, Asp-76, Asp-78, Asp-80, Glu-87, Asp-113, Asp-115, Asp-117, Arg-119, Glu-124, Asp-149, Asp-151, Asp-153, Cys-155, and Glu-160.

Its function is as follows. Potential calcium sensor. The polypeptide is Probable calcium-binding protein CML16 (CML16) (Oryza sativa subsp. japonica (Rice)).